We begin with the raw amino-acid sequence, 283 residues long: NFU1 iron-sulfur cluster scaffold homolog, mitochondrial (283 aa).

The transit peptide at 1–65 (MSKFLSQAAI…ELRMPVACRR (65 aa)) directs the protein to the mitochondrion. Positions 182-250 (IKELLDTRIR…IPEVESVEQV (69 aa)) are nifU. [4Fe-4S] cluster is bound by residues Cys-219 and Cys-222.

This sequence belongs to the NifU family.

Its subcellular location is the mitochondrion. Its function is as follows. Molecular scaffold for [Fe-S] cluster assembly of mitochondrial iron-sulfur proteins. The chain is NFU1 iron-sulfur cluster scaffold homolog, mitochondrial from Drosophila simulans (Fruit fly).